Consider the following 962-residue polypeptide: Glycine dehydrogenase (decarboxylating) (962 aa).

Lys709 carries the post-translational modification N6-(pyridoxal phosphate)lysine.

This sequence belongs to the GcvP family. As to quaternary structure, the glycine cleavage system is composed of four proteins: P, T, L and H. Pyridoxal 5'-phosphate serves as cofactor.

It carries out the reaction N(6)-[(R)-lipoyl]-L-lysyl-[glycine-cleavage complex H protein] + glycine + H(+) = N(6)-[(R)-S(8)-aminomethyldihydrolipoyl]-L-lysyl-[glycine-cleavage complex H protein] + CO2. In terms of biological role, the glycine cleavage system catalyzes the degradation of glycine. The P protein binds the alpha-amino group of glycine through its pyridoxal phosphate cofactor; CO(2) is released and the remaining methylamine moiety is then transferred to the lipoamide cofactor of the H protein. The protein is Glycine dehydrogenase (decarboxylating) of Shewanella baltica (strain OS195).